Reading from the N-terminus, the 436-residue chain is Methylenetetrahydrofolate--tRNA-(uracil-5-)-methyltransferase TrmFO (436 aa).

An FAD-binding site is contributed by 8–13 (GAGLAG).

This sequence belongs to the MnmG family. TrmFO subfamily. The cofactor is FAD.

It is found in the cytoplasm. It catalyses the reaction uridine(54) in tRNA + (6R)-5,10-methylene-5,6,7,8-tetrahydrofolate + NADH + H(+) = 5-methyluridine(54) in tRNA + (6S)-5,6,7,8-tetrahydrofolate + NAD(+). The enzyme catalyses uridine(54) in tRNA + (6R)-5,10-methylene-5,6,7,8-tetrahydrofolate + NADPH + H(+) = 5-methyluridine(54) in tRNA + (6S)-5,6,7,8-tetrahydrofolate + NADP(+). Catalyzes the folate-dependent formation of 5-methyl-uridine at position 54 (M-5-U54) in all tRNAs. The chain is Methylenetetrahydrofolate--tRNA-(uracil-5-)-methyltransferase TrmFO from Persephonella marina (strain DSM 14350 / EX-H1).